We begin with the raw amino-acid sequence, 623 residues long: 1-butanol dehydrogenase (quinone) (623 aa).

Residues 1-28 form the signal peptide; it reads MKKSHAKPFALRAIVVATAAALSLPAAA. Ca(2+) is bound by residues Asp-40, Thr-43, and Asp-46. Glu-90 is a binding site for pyrroloquinoline quinone. Cys-134 and Cys-135 are disulfide-bonded. Pyrroloquinoline quinone-binding positions include Arg-140, Thr-184, and 202–204; that span reads HGS. Glu-208 contributes to the Ca(2+) binding site. Positions 235-274 are disordered; that stretch reads HMGRLNGKDSTPTGDPKAPSWPDDPNSPTGKVEAWSQGGG. Ca(2+)-binding residues include Asn-295 and Asp-345. Asp-345 acts as the Proton acceptor in catalysis. Arg-374 lines the pyrroloquinoline quinone pocket. The segment at 420–440 is disordered; the sequence is GKPIEKDNRPPQPKEGADKGE. Ala-592 lines the pyrroloquinoline quinone pocket.

Belongs to the bacterial PQQ dehydrogenase family. Requires pyrroloquinoline quinone as cofactor. The cofactor is Ca(2+).

The protein resides in the periplasm. The enzyme catalyses butan-1-ol + a quinone = butanal + a quinol. Functionally, involved in the metabolism of butane. May function primarily in energy generation. Catalyzes the oxidation of 1-butanol to 1-butanal. Also able to use 2-butanol and butyraldehyde, although the affinity is comparatively low. The protein is 1-butanol dehydrogenase (quinone) of Thauera butanivorans (strain ATCC 43655 / DSM 2080 / JCM 20651 / CCUG 51053 / NBRC 103042 / IAM 12574 / Bu B1211) (Pseudomonas butanovora).